A 336-amino-acid polypeptide reads, in one-letter code: Tetraacyldisaccharide 4'-kinase (336 aa).

Residue 60–67 coordinates ATP; it reads TVGGTGKT.

This sequence belongs to the LpxK family.

The catalysed reaction is a lipid A disaccharide + ATP = a lipid IVA + ADP + H(+). The protein operates within glycolipid biosynthesis; lipid IV(A) biosynthesis; lipid IV(A) from (3R)-3-hydroxytetradecanoyl-[acyl-carrier-protein] and UDP-N-acetyl-alpha-D-glucosamine: step 6/6. Transfers the gamma-phosphate of ATP to the 4'-position of a tetraacyldisaccharide 1-phosphate intermediate (termed DS-1-P) to form tetraacyldisaccharide 1,4'-bis-phosphate (lipid IVA). This Pseudomonas entomophila (strain L48) protein is Tetraacyldisaccharide 4'-kinase.